A 383-amino-acid polypeptide reads, in one-letter code: Chitinase-3-like protein 1 (383 aa).

Positions 1-21 are cleaved as a signal peptide; that stretch reads MGVKASQTGFVVLVLLQCCSA. The GH18 domain maps to 22–383; it reads YKLVCYYTSW…NAIKDALAAT (362 aa). C26 and C51 are joined by a disulfide. N-linked (GlcNAc...) asparagine glycosylation is present at N60. Chitin contacts are provided by residues 70-71, 97-100, Y141, 204-207, and R263; these read EW, GGWN, and MTYD. A disulfide bond links C300 and C364. The important for AKT1 activation and IL8 production stretch occupies residues 324 to 338; sequence QWVGYDDQESVKSKV. Position 352 (W352) interacts with chitin.

Belongs to the glycosyl hydrolase 18 family. As to quaternary structure, monomer. In terms of processing, glycosylated. In terms of tissue distribution, present in activated macrophages, articular chondrocytes, synovial cells as well as in liver. Very low or undetectable expression in non-inflammatory colon. Undetectable in muscle tissues, lung, pancreas, mononuclear cells, or fibroblasts.

The protein localises to the secreted. It is found in the extracellular space. It localises to the cytoplasm. Its subcellular location is the perinuclear region. The protein resides in the endoplasmic reticulum. Functionally, carbohydrate-binding lectin with a preference for chitin. Has no chitinase activity. May play a role in tissue remodeling and in the capacity of cells to respond to and cope with changes in their environment. Plays a role in T-helper cell type 2 (Th2) inflammatory response and IL-13-induced inflammation, regulating allergen sensitization, inflammatory cell apoptosis, dendritic cell accumulation and M2 macrophage differentiation. Facilitates invasion of pathogenic enteric bacteria into colonic mucosa and lymphoid organs. Mediates activation of AKT1 signaling pathway and subsequent IL8 production in colonic epithelial cells. Regulates antibacterial responses in lung by contributing to macrophage bacterial killing, controlling bacterial dissemination and augmenting host tolerance. Also regulates hyperoxia-induced injury, inflammation and epithelial apoptosis in lung. This Homo sapiens (Human) protein is Chitinase-3-like protein 1 (CHI3L1).